The following is a 218-amino-acid chain: DNA-directed RNA polymerase III subunit RPC7-like (218 aa).

The disordered stretch occupies residues 130 to 218 (TIILPKRPPK…SDDNMDEAIY (89 aa)). Over residues 139–160 (KTTEDKEETIQKLETLEKKEEE) the composition is skewed to basic and acidic residues. Acidic residues-rich tracts occupy residues 161-193 (VTSEEDEEKEEEEEKEEEEEEEYDEEEHEEETD) and 201-218 (NGEDFGGDSDDNMDEAIY).

The protein belongs to the eukaryotic RPC7 RNA polymerase subunit family. As to quaternary structure, component of the RNA polymerase III (Pol III) complex consisting of 17 subunits. Pol III exists as two alternative complexes defined by the mutually exclusive incorporation of subunit POLR3G/RPC7alpha or POLR3GL/RPC7beta. Found in a trimeric complex with POLR3C/RPC3 and POLR3F/RPC6. Directly interacts with POLR3C.

Its subcellular location is the nucleus. DNA-dependent RNA polymerase catalyzes the transcription of DNA into RNA using the four ribonucleoside triphosphates as substrates. Specific peripheric component of RNA polymerase III which synthesizes small RNAs, such as 5S rRNA and tRNAs. The chain is DNA-directed RNA polymerase III subunit RPC7-like (POLR3GL) from Bos taurus (Bovine).